A 393-amino-acid chain; its full sequence is 4-hydroxyphenylpyruvate dioxygenase (393 aa).

2 VOC domains span residues 17–148 (AFDH…LLER) and 179–339 (FLDH…IFSK). Residues His-182, His-267, and Glu-350 each coordinate Fe cation.

The protein belongs to the 4HPPD family. The cofactor is Fe cation.

It carries out the reaction 3-(4-hydroxyphenyl)pyruvate + O2 = homogentisate + CO2. It participates in amino-acid degradation; L-phenylalanine degradation; acetoacetate and fumarate from L-phenylalanine: step 3/6. Key enzyme in the degradation of tyrosine. This is 4-hydroxyphenylpyruvate dioxygenase (hpd-1) from Caenorhabditis briggsae.